The sequence spans 116 residues: DNA polymerase epsilon subunit 4 (116 aa).

Residues 1–10 (MAAAAPGSGA) show a composition bias toward low complexity. The disordered stretch occupies residues 1–36 (MAAAAPGSGAAREEEGTGGDAATPQPPAPTSAPGAR).

As to quaternary structure, component of the DNA polymerase epsilon complex consisting of four subunits: the catalytic subunit POLE and the accessory subunits POLE2, POLE3 and POLE4. Interaction with POLE3 is a prerequisite for further binding with POLE and POLE2.

Its subcellular location is the nucleus. Functionally, accessory component of the DNA polymerase epsilon complex. Participates in DNA repair and in chromosomal DNA replication. The protein is DNA polymerase epsilon subunit 4 (POLE4) of Bos taurus (Bovine).